The following is a 100-amino-acid chain: MLAIENYLILSAILFAIGTIGVLTRRNAIVIFMCIELMLNAVNLTFIAFSRHLGNIDGQVFVFFVMTVAAAEAAVGLALMIAFFKNRESIDVEDVNLMKL.

The next 3 membrane-spanning stretches (helical) occupy residues 2–22 (LAIE…TIGV), 29–49 (IVIF…FIAF), and 61–81 (FVFF…ALMI).

This sequence belongs to the complex I subunit 4L family. As to quaternary structure, NDH-1 is composed of 14 different subunits. Subunits NuoA, H, J, K, L, M, N constitute the membrane sector of the complex.

Its subcellular location is the cell inner membrane. The catalysed reaction is a quinone + NADH + 5 H(+)(in) = a quinol + NAD(+) + 4 H(+)(out). NDH-1 shuttles electrons from NADH, via FMN and iron-sulfur (Fe-S) centers, to quinones in the respiratory chain. The immediate electron acceptor for the enzyme in this species is believed to be ubiquinone. Couples the redox reaction to proton translocation (for every two electrons transferred, four hydrogen ions are translocated across the cytoplasmic membrane), and thus conserves the redox energy in a proton gradient. This is NADH-quinone oxidoreductase subunit K 2 from Geobacter sp. (strain M21).